The chain runs to 62 residues: UPF0337 protein gsr0040 (62 aa).

2 stretches are compositionally biased toward basic and acidic residues: residues 1–15 (MGID…KDVQ) and 27–62 (DDPK…IDNV). The tract at residues 1–62 (MGIDKRAEAT…DQAHRTIDNV (62 aa)) is disordered.

It belongs to the UPF0337 (CsbD) family.

The polypeptide is UPF0337 protein gsr0040 (Gloeobacter violaceus (strain ATCC 29082 / PCC 7421)).